A 441-amino-acid polypeptide reads, in one-letter code: GTPase Der (441 aa).

EngA-type G domains are found at residues 2 to 164 (HKVA…PADD) and 173 to 343 (IRIS…DKWQ). Residues 8–15 (GRPNVGKS), 55–59 (DTGGL), 116–119 (NKID), 179–186 (GRPNVGKS), 226–230 (DTAGI), and 288–291 (NKWD) each bind GTP.

It belongs to the TRAFAC class TrmE-Era-EngA-EngB-Septin-like GTPase superfamily. EngA (Der) GTPase family. In terms of assembly, associates with the 50S ribosomal subunit.

Its function is as follows. GTPase that plays an essential role in the late steps of ribosome biogenesis. In Deinococcus deserti (strain DSM 17065 / CIP 109153 / LMG 22923 / VCD115), this protein is GTPase Der.